A 63-amino-acid chain; its full sequence is Large ribosomal subunit protein bL35 (63 aa).

Residues Met-1 to Leu-43 show a composition bias toward basic residues. Residues Met-1–Lys-45 form a disordered region.

This sequence belongs to the bacterial ribosomal protein bL35 family.

This is Large ribosomal subunit protein bL35 from Bdellovibrio bacteriovorus (strain ATCC 15356 / DSM 50701 / NCIMB 9529 / HD100).